A 508-amino-acid chain; its full sequence is UTP--glucose-1-phosphate uridylyltransferase (508 aa).

The residue at position 2 (serine 2) is a Blocked amino end (Ser). Phosphoserine is present on serine 13. UTP contacts are provided by residues 113 to 116, lysine 127, glutamine 190, and glycine 222; that span reads LNGG. 115–116 contacts substrate; that stretch reads GG. Lysine 127 is a Mg(2+) binding site. Substrate contacts are provided by residues histidine 223 and 251 to 253; that span reads NID. UTP is bound by residues aspartate 253 and lysine 396. Position 253 (aspartate 253) interacts with Mg(2+). Lysine 396 is an active-site residue. Position 426 is a phosphothreonine (threonine 426). Position 434 is a phosphoserine (serine 434). At lysine 438 the chain carries N6-acetyllysine. Residues serine 448 and serine 461 each carry the phosphoserine modification. The oligomerization stretch occupies residues 457–508; that stretch reads HLTVSGDVTFGKNVSLKGTVIIIANHGDRIDIPPGAVLENKIVSGNLRILDH. Residues 502-503 form a critical for end-to-end subunit interaction region; the sequence is NL.

The protein belongs to the UDPGP type 1 family. Homooctamer.

The protein localises to the cytoplasm. The catalysed reaction is alpha-D-glucose 1-phosphate + UTP + H(+) = UDP-alpha-D-glucose + diphosphate. It functions in the pathway glycan biosynthesis; glycogen biosynthesis. Functionally, UTP--glucose-1-phosphate uridylyltransferase catalyzing the conversion of glucose-1-phosphate into UDP-glucose, a crucial precursor for the production of glycogen. The sequence is that of UTP--glucose-1-phosphate uridylyltransferase (UGP2) from Bos taurus (Bovine).